Consider the following 600-residue polypeptide: Dihydroxy-acid dehydratase (600 aa).

D82 contacts Mg(2+). C123 contributes to the [2Fe-2S] cluster binding site. Mg(2+) is bound by residues D124 and K125. Residue K125 is modified to N6-carboxylysine. C192 is a binding site for [2Fe-2S] cluster. A Mg(2+)-binding site is contributed by E489. Catalysis depends on S515, which acts as the Proton acceptor.

The protein belongs to the IlvD/Edd family. In terms of assembly, homodimer. [2Fe-2S] cluster is required as a cofactor. Requires Mg(2+) as cofactor.

It catalyses the reaction (2R)-2,3-dihydroxy-3-methylbutanoate = 3-methyl-2-oxobutanoate + H2O. The catalysed reaction is (2R,3R)-2,3-dihydroxy-3-methylpentanoate = (S)-3-methyl-2-oxopentanoate + H2O. The protein operates within amino-acid biosynthesis; L-isoleucine biosynthesis; L-isoleucine from 2-oxobutanoate: step 3/4. It participates in amino-acid biosynthesis; L-valine biosynthesis; L-valine from pyruvate: step 3/4. Functions in the biosynthesis of branched-chain amino acids. Catalyzes the dehydration of (2R,3R)-2,3-dihydroxy-3-methylpentanoate (2,3-dihydroxy-3-methylvalerate) into 2-oxo-3-methylpentanoate (2-oxo-3-methylvalerate) and of (2R)-2,3-dihydroxy-3-methylbutanoate (2,3-dihydroxyisovalerate) into 2-oxo-3-methylbutanoate (2-oxoisovalerate), the penultimate precursor to L-isoleucine and L-valine, respectively. The polypeptide is Dihydroxy-acid dehydratase (Bacteroides thetaiotaomicron (strain ATCC 29148 / DSM 2079 / JCM 5827 / CCUG 10774 / NCTC 10582 / VPI-5482 / E50)).